The sequence spans 87 residues: Apolipoprotein C-I (87 aa).

The N-terminal stretch at 1–26 (MRLILSLPVLAVVLAMVLEGPAPAQA) is a signal peptide.

It belongs to the apolipoprotein C1 family.

It is found in the secreted. Inhibitor of lipoprotein binding to the low density lipoprotein (LDL) receptor, LDL receptor-related protein, and very low density lipoprotein (VLDL) receptor. Associates with high density lipoproteins (HDL) and the triacylglycerol-rich lipoproteins in the plasma and makes up about 10% of the protein of the VLDL and 2% of that of HDL. Appears to interfere directly with fatty acid uptake and is also the major plasma inhibitor of cholesteryl ester transfer protein (CETP). Binds free fatty acids and reduces their intracellular esterification. Modulates the interaction of APOE with beta-migrating VLDL and inhibits binding of beta-VLDL to the LDL receptor-related protein. This chain is Apolipoprotein C-I (APOC1), found in Pteropus vampyrus (Large flying fox).